Here is a 506-residue protein sequence, read N- to C-terminus: Kynurenine 3-monooxygenase (506 aa).

It belongs to the aromatic-ring hydroxylase family. KMO subfamily. FAD serves as cofactor.

It is found in the mitochondrion outer membrane. It catalyses the reaction L-kynurenine + NADPH + O2 + H(+) = 3-hydroxy-L-kynurenine + NADP(+) + H2O. The protein operates within cofactor biosynthesis; NAD(+) biosynthesis; quinolinate from L-kynurenine: step 1/3. In terms of biological role, catalyzes the hydroxylation of L-kynurenine (L-Kyn) to form 3-hydroxy-L-kynurenine (L-3OHKyn). Required for synthesis of quinolinic acid. The chain is Kynurenine 3-monooxygenase (bna4) from Emericella nidulans (strain FGSC A4 / ATCC 38163 / CBS 112.46 / NRRL 194 / M139) (Aspergillus nidulans).